The primary structure comprises 194 residues: uncharacterized protein (194 aa).

Disordered stretches follow at residues 1 to 21 and 73 to 97; these read MPKG…APPL and PATV…PWPS. Positions 73-96 are enriched in pro residues; that stretch reads PATVPPPPPGLGPPSERPCPPPWP.

This is an uncharacterized protein from Mus musculus (Mouse).